The sequence spans 254 residues: AA9 family lytic polysaccharide monooxygenase A (254 aa).

Positions 1 to 19 (MKYSILGLTALSFVASAAA) are cleaved as a signal peptide. Residue H20 participates in Cu(2+) binding. A Methylhistidine modification is found at H20. V28 is a (1,4-beta-D-glucosyl)n binding site. N52 is a glycosylation site (N-linked (GlcNAc...) asparagine). C60 and C186 are disulfide-bonded. Positions 66, 67, 77, and 86 each coordinate (1,4-beta-D-glucosyl)n. H97 contributes to the Cu(2+) binding site. N129 carries an N-linked (GlcNAc...) asparagine glycan. V148 and R159 together coordinate (1,4-beta-D-glucosyl)n. O2 is bound by residues H166 and Q181. Y183 lines the Cu(2+) pocket.

The protein belongs to the polysaccharide monooxygenase AA9 family. It depends on Cu(2+) as a cofactor. The catalytically essential N-terminal histidine His-20 is post-translationally modified by methylation to prevent protonation of the histidine side chain, and protect the critical active site of the enzyme from oxidative damage.

Its subcellular location is the secreted. The catalysed reaction is [(1-&gt;4)-beta-D-glucosyl]n+m + reduced acceptor + O2 = 4-dehydro-beta-D-glucosyl-[(1-&gt;4)-beta-D-glucosyl]n-1 + [(1-&gt;4)-beta-D-glucosyl]m + acceptor + H2O.. With respect to regulation, the polyphenol cinnamtannin B1 contained in methanolic extract of Cinnamomum cassia (cinnamon) acts as an inhibitor of catalytic activity. In terms of biological role, lytic polysaccharide monooxygenase (LPMO) that depolymerizes crystalline and amorphous polysaccharides via the oxidation of scissile alpha- or beta-(1-4)-glycosidic bonds, yielding C1 or C4 oxidation product. Catalysis by LPMOs requires the reduction of the active-site copper from Cu(II) to Cu(I) by a reducing agent and H(2)O(2) or O(2) as a cosubstrate. Is able to cleave phosphoric acid swollen cellulose (PASC) in the presence of a reducing agent, yielding a range of cellooligosaccharides dominated by cellobiose and cellotriose. Activity is less sensitive to the reducing agent potential when cleaving xylan, suggesting that distinct catalytic mechanisms exist for xylan and glucan cleavage. The chain is AA9 family lytic polysaccharide monooxygenase A from Panus similis (Lentinoid fungus).